The primary structure comprises 63 residues: Large ribosomal subunit protein bL28 (63 aa).

The protein belongs to the bacterial ribosomal protein bL28 family.

The protein is Large ribosomal subunit protein bL28 of Geotalea daltonii (strain DSM 22248 / JCM 15807 / FRC-32) (Geobacter daltonii).